Reading from the N-terminus, the 288-residue chain is Protein PGR (288 aa).

7 helical membrane passes run 1–21 (METS…LIAF), 29–49 (LDLS…TAGF), 91–111 (VLCN…LTGW), 123–143 (IVTA…GDTW), 177–197 (LLAA…FGLF), 210–230 (LLVI…DSIL), and 268–288 (VNFV…VYIF).

It belongs to the TMEM19 family. In terms of tissue distribution, expressed in the vasculature of leaves, roots, inflorescences, siliques, anther filaments and sepals. Detected primarily in the phloem tissues, including in the root ans shoot apical meristems.

The protein localises to the cell membrane. In terms of biological role, involved in the glucose-triggered developmental leaf growth process. The sequence is that of Protein PGR from Arabidopsis thaliana (Mouse-ear cress).